The sequence spans 188 residues: Elongation factor P (188 aa).

This sequence belongs to the elongation factor P family.

Its subcellular location is the cytoplasm. The protein operates within protein biosynthesis; polypeptide chain elongation. Involved in peptide bond synthesis. Stimulates efficient translation and peptide-bond synthesis on native or reconstituted 70S ribosomes in vitro. Probably functions indirectly by altering the affinity of the ribosome for aminoacyl-tRNA, thus increasing their reactivity as acceptors for peptidyl transferase. This Cellvibrio japonicus (strain Ueda107) (Pseudomonas fluorescens subsp. cellulosa) protein is Elongation factor P.